The primary structure comprises 108 residues: uncharacterized protein (108 aa).

3 consecutive transmembrane segments (helical) span residues 36-56 (LAIM…DKMI), 58-78 (FIFV…KLLF), and 88-108 (IVFL…FFNL).

It is found in the cell membrane. This is an uncharacterized protein from Alkalihalophilus pseudofirmus (strain ATCC BAA-2126 / JCM 17055 / OF4) (Bacillus pseudofirmus).